Reading from the N-terminus, the 452-residue chain is tRNA modification GTPase MnmE (452 aa).

3 residues coordinate (6S)-5-formyl-5,6,7,8-tetrahydrofolate: R24, E81, and R120. One can recognise a TrmE-type G domain in the interval 216–373 (GIKTVIVGAP…LFGAIGRWAD (158 aa)). GTP contacts are provided by residues 226–231 (NVGKSS), 245–251 (SAEPGTT), and 270–273 (DTAG). The Mg(2+) site is built by S230 and T251. Residue K452 participates in (6S)-5-formyl-5,6,7,8-tetrahydrofolate binding.

The protein belongs to the TRAFAC class TrmE-Era-EngA-EngB-Septin-like GTPase superfamily. TrmE GTPase family. In terms of assembly, homodimer. Heterotetramer of two MnmE and two MnmG subunits. Requires K(+) as cofactor.

It is found in the cytoplasm. Its function is as follows. Exhibits a very high intrinsic GTPase hydrolysis rate. Involved in the addition of a carboxymethylaminomethyl (cmnm) group at the wobble position (U34) of certain tRNAs, forming tRNA-cmnm(5)s(2)U34. The chain is tRNA modification GTPase MnmE from Opitutus terrae (strain DSM 11246 / JCM 15787 / PB90-1).